We begin with the raw amino-acid sequence, 414 residues long: Putative transporter YoaB (414 aa).

Residues Met-1–Leu-11 are Cytoplasmic-facing. A helical membrane pass occupies residues Ala-12–Leu-32. Over Ser-33 to Ala-47 the chain is Extracellular. Residues Ser-48–Leu-68 form a helical membrane-spanning segment. Topologically, residues Glu-69 to Arg-75 are cytoplasmic. A helical membrane pass occupies residues Thr-76 to Phe-96. The Extracellular segment spans residues Glu-97 to Thr-107. A helical membrane pass occupies residues Tyr-108–Tyr-128. At Arg-129–Ser-136 the chain is on the cytoplasmic side. Residues Thr-137–Tyr-157 form a helical membrane-spanning segment. Residues Ser-158–Tyr-167 are Extracellular-facing. The helical transmembrane segment at Leu-168–Ile-188 threads the bilayer. Over Asn-189 to Arg-219 the chain is Cytoplasmic. Residues Val-220–Phe-240 traverse the membrane as a helical segment. At Leu-241–Trp-255 the chain is on the extracellular side. A helical membrane pass occupies residues Leu-256 to Val-276. Over Gly-277–Val-286 the chain is Cytoplasmic. A helical transmembrane segment spans residues Ile-287–Phe-307. The Extracellular segment spans residues Ser-308 to Ser-316. Residues Val-317 to Pro-337 traverse the membrane as a helical segment. The Cytoplasmic portion of the chain corresponds to Thr-338–Asp-343. The helical transmembrane segment at Lys-344 to Ala-364 threads the bilayer. Residues Leu-365–Ala-375 are Extracellular-facing. A helical transmembrane segment spans residues Gln-376–Ile-398. The Cytoplasmic portion of the chain corresponds to Pro-399–Ser-414.

Belongs to the major facilitator superfamily. Sugar transporter (TC 2.A.1.1) family. CsbX subfamily.

It is found in the cell membrane. In Bacillus subtilis (strain 168), this protein is Putative transporter YoaB (yoaB).